We begin with the raw amino-acid sequence, 465 residues long: Eukaryotic translation initiation factor 3 subunit M (465 aa).

Residues 215–383 enclose the PCI domain; the sequence is EEMSYNHVIL…GEFLVHRATY (169 aa). The tract at residues 429 to 465 is disordered; the sequence is AAAESGREGGARGGAGERRRGGGGHQGPREVDLVGGD. 2 stretches are compositionally biased toward basic and acidic residues: residues 433–448 and 455–465; these read SGREGGARGGAGERRR and GPREVDLVGGD.

It belongs to the eIF-3 subunit M family. In terms of assembly, component of the eukaryotic translation initiation factor 3 (eIF-3) complex.

It is found in the cytoplasm. Component of the eukaryotic translation initiation factor 3 (eIF-3) complex, which is involved in protein synthesis of a specialized repertoire of mRNAs and, together with other initiation factors, stimulates binding of mRNA and methionyl-tRNAi to the 40S ribosome. The eIF-3 complex specifically targets and initiates translation of a subset of mRNAs involved in cell proliferation. The chain is Eukaryotic translation initiation factor 3 subunit M from Coccidioides immitis (strain RS) (Valley fever fungus).